Consider the following 130-residue polypeptide: Ribonuclease VapC46 (130 aa).

The 115-residue stretch at 4 to 118 folds into the PINc domain; sequence IYLDSSAIVK…CTYDDRMRDA (115 aa). Mg(2+)-binding residues include Asp-7 and Asp-91.

The protein belongs to the PINc/VapC protein family. Mg(2+) serves as cofactor.

Its function is as follows. Toxic component of a type II toxin-antitoxin (TA) system. An RNase. Upon expression in M.smegmatis inhibits colony formation. Its toxic effect is neutralized by coexpression with cognate antitoxin VapB46. This chain is Ribonuclease VapC46, found in Mycobacterium tuberculosis (strain ATCC 25618 / H37Rv).